The following is a 664-amino-acid chain: MSARQDEDQRLQAQTQAQAQVQAQAPLSLYRERLKIANACQSCRASKVKCDGGRPVCARCQKRGRACSYSQHDAASPRGRGRQRAKAPTRQPRPIRSRASVELPVTAPTPVTAQASPLIAQDYSLQTPSATQTPSTTGFSGSSDLEHVHEDRDESRAFYAAHGRFAGEVSSTIDKMAGLSPDTTCSLVPFVDAPLFGDVGEPPRNVVLDFASDLPRAYADRLLAIYWHHVHPVEPVLDQQQFCRTYDAFYSGSGTPLHVDRDIWLSTLNIVFALAVQIQESIPMQKRDDEANRYFQRAWALLRPEAILWKPGSLELVQCLLLMNRYLHCTNNQQKTSMAATLAIRIAQNMVCHTSEESPSSDADKDLRHKVWASCVALERPALLTGHGSDFHAWELELHEIGTHIQLAQVQSKNSMATKLGLPRLYQQDEYHAIAVQLDGCLNKWEKSLPDDWRLQNMHMIHDRRARAERYLLHFRLLHSRIYLHRPMLARLYAIKSHAPTAAAASDPSTISDRLLQECARMCLEAAQKLTSLIAEIHDPNEPIGILPWWYRVYYLHIAGIHFLAAMFASDLFTPSVERAWYQVLAALRAHEHLSLYVQQCARTFETLAARILNARCLSVNGNGIMALDDGAPGLFLDDMFQDVNFDLDEFLFSVDDTGRRTNY.

A DNA-binding region (zn(2)-C6 fungal-type) is located at residues 40 to 67 (CQSCRASKVKCDGGRPVCARCQKRGRAC). The tract at residues 68 to 102 (SYSQHDAASPRGRGRQRAKAPTRQPRPIRSRASVE) is disordered.

The protein resides in the nucleus. Its function is as follows. Transcription factor that acts in concert with sor4 which is a transcriptional activator of the gene cluster that mediates the biosynthesis of sorbicillinoids, a diverse group of yellow secondary metabolites that restrict growth of competing pathogenic fungi but not of bacteria. Regulates the cluster genes in a light dependent manner. Also plays a direct or indirect role in regulation of paracelsin biosynthesis and cellulase gene expression. This Hypocrea jecorina (strain QM6a) (Trichoderma reesei) protein is Sorbicillinoid biosynthetic cluster transcription factor sor3.